A 576-amino-acid chain; its full sequence is Proteinaceous RNase P 3 (576 aa).

The span at 65-75 shows a compositional bias: basic and acidic residues; the sequence is NRRSRHDDESP. Residues 65–88 are disordered; sequence NRRSRHDDESPKNPNKKKKGNRNP. PPR repeat units follow at residues 88–123, 129–166, 167–201, and 204–238; these read PEKS…DIRL, QSLL…GISP, NESS…GGVS, and RLRT…GIVL. Residues 335–570 form the PRORP domain; sequence SSAGKCLSCD…KEESLRSWMC (236 aa). Zn(2+) contacts are provided by cysteine 340 and cysteine 343. Aspartate 402, aspartate 480, aspartate 481, and aspartate 499 together coordinate Mn(2+). Residues histidine 553 and cysteine 570 each coordinate Zn(2+).

The protein belongs to the PPR family. P subfamily. Mg(2+) serves as cofactor. The cofactor is Mn(2+).

It is found in the nucleus. The enzyme catalyses Endonucleolytic cleavage of RNA, removing 5'-extranucleotides from tRNA precursor.. Endonuclease RNase P responsible for the 5' maturation of tRNA precursors. Also involved in the maturation of mRNA and small nucleolar RNA (snoRNA). The chain is Proteinaceous RNase P 3 (PRORP3) from Arabidopsis thaliana (Mouse-ear cress).